A 332-amino-acid chain; its full sequence is Lipoyl synthase (332 aa).

[4Fe-4S] cluster-binding residues include cysteine 55, cysteine 60, cysteine 66, cysteine 81, cysteine 85, cysteine 88, and serine 292. The 215-residue stretch at 67-281 folds into the Radical SAM core domain; sequence WEDREATFLI…SDEAERIGFL (215 aa).

This sequence belongs to the radical SAM superfamily. Lipoyl synthase family. The cofactor is [4Fe-4S] cluster.

It is found in the cytoplasm. The enzyme catalyses [[Fe-S] cluster scaffold protein carrying a second [4Fe-4S](2+) cluster] + N(6)-octanoyl-L-lysyl-[protein] + 2 oxidized [2Fe-2S]-[ferredoxin] + 2 S-adenosyl-L-methionine + 4 H(+) = [[Fe-S] cluster scaffold protein] + N(6)-[(R)-dihydrolipoyl]-L-lysyl-[protein] + 4 Fe(3+) + 2 hydrogen sulfide + 2 5'-deoxyadenosine + 2 L-methionine + 2 reduced [2Fe-2S]-[ferredoxin]. It functions in the pathway protein modification; protein lipoylation via endogenous pathway; protein N(6)-(lipoyl)lysine from octanoyl-[acyl-carrier-protein]: step 2/2. Catalyzes the radical-mediated insertion of two sulfur atoms into the C-6 and C-8 positions of the octanoyl moiety bound to the lipoyl domains of lipoate-dependent enzymes, thereby converting the octanoylated domains into lipoylated derivatives. In Beutenbergia cavernae (strain ATCC BAA-8 / DSM 12333 / CCUG 43141 / JCM 11478 / NBRC 16432 / NCIMB 13614 / HKI 0122), this protein is Lipoyl synthase.